The sequence spans 117 residues: Small ribosomal subunit protein bS6 (117 aa).

The tract at residues 97-117 (TEEPSAILTKKDDRRGRRERN) is disordered.

The protein belongs to the bacterial ribosomal protein bS6 family.

Its function is as follows. Binds together with bS18 to 16S ribosomal RNA. In Maricaulis maris (strain MCS10) (Caulobacter maris), this protein is Small ribosomal subunit protein bS6.